A 397-amino-acid chain; its full sequence is 4-hydroxyphenylpyruvate dioxygenase (397 aa).

VOC domains lie at 18 to 149 and 181 to 339; these read NFHH…FVEY and FIDH…IFTK. His-184, His-267, and Glu-350 together coordinate Fe cation.

It belongs to the 4HPPD family. Homodimer. Fe cation serves as cofactor.

It localises to the cytoplasm. The protein localises to the endoplasmic reticulum membrane. The protein resides in the golgi apparatus membrane. The enzyme catalyses 3-(4-hydroxyphenyl)pyruvate + O2 = homogentisate + CO2. It functions in the pathway amino-acid degradation; L-phenylalanine degradation; acetoacetate and fumarate from L-phenylalanine: step 3/6. In terms of biological role, catalyzes the conversion of 4-hydroxyphenylpyruvic acid to homogentisic acid, one of the steps in tyrosine catabolism. The sequence is that of 4-hydroxyphenylpyruvate dioxygenase (hpd) from Danio rerio (Zebrafish).